Reading from the N-terminus, the 312-residue chain is MDKEWIEVEILTSSEAAEAVTGILYNTGVKGVSIEDSKDIEEREQSEDNLFDWVELEELNVREGATIKAYYKDDENFEHYFQYIKDSVLNLDRFGLDKGEGKVTAKKVDEQDWANNWKKYYKPTKIGNEIVVKPTWEDYNKKDNEIVIELDPGMAFGTGTHETTRLCVKALEEYVNEDSVVFDIGTGSGILSIAAAKLNAKHVVGVDLDPVAVDAAKENVELNNLDNIEILYGNLMEVVDGKANIVVANILADIIKILAEDVKKFVVEGGYFISSGIILDRKDDVIEKLQQCGFEIEKINVDGEWCCIIARA.

Residues threonine 164, glycine 185, aspartate 207, and asparagine 249 each contribute to the S-adenosyl-L-methionine site.

The protein belongs to the methyltransferase superfamily. PrmA family.

The protein localises to the cytoplasm. It catalyses the reaction L-lysyl-[protein] + 3 S-adenosyl-L-methionine = N(6),N(6),N(6)-trimethyl-L-lysyl-[protein] + 3 S-adenosyl-L-homocysteine + 3 H(+). Methylates ribosomal protein L11. This Clostridium novyi (strain NT) protein is Ribosomal protein L11 methyltransferase.